A 335-amino-acid polypeptide reads, in one-letter code: Cobalt-precorrin-5B C(1)-methyltransferase (335 aa).

Belongs to the CbiD family.

It catalyses the reaction Co-precorrin-5B + S-adenosyl-L-methionine = Co-precorrin-6A + S-adenosyl-L-homocysteine. It participates in cofactor biosynthesis; adenosylcobalamin biosynthesis; cob(II)yrinate a,c-diamide from sirohydrochlorin (anaerobic route): step 6/10. In terms of biological role, catalyzes the methylation of C-1 in cobalt-precorrin-5B to form cobalt-precorrin-6A. The sequence is that of Cobalt-precorrin-5B C(1)-methyltransferase from Methanospirillum hungatei JF-1 (strain ATCC 27890 / DSM 864 / NBRC 100397 / JF-1).